The chain runs to 110 residues: Small ribosomal subunit protein bS16 (110 aa).

Positions 81-104 (VRPAEVLGKQKQEKERSAKKKDAA) are enriched in basic and acidic residues. Residues 81–110 (VRPAEVLGKQKQEKERSAKKKDAAASETSE) are disordered.

It belongs to the bacterial ribosomal protein bS16 family.

The protein is Small ribosomal subunit protein bS16 of Prochlorococcus marinus (strain NATL2A).